The primary structure comprises 737 residues: MAGRPEKCFSLIRFTLLCLKMVISSKTAPEIPTIDQAYSKISNSITVEWTTVPGATSYLLTAEDGNTIIETTVANSPGTVTGLKAATLYQITIRSISASGQSQASSPKQAKTVLAAPVLEVSSPSPDSILVSWDAVYMAIGFSVSVMRANGLGRIWKENTTNTSLTFSSLDAGTLYTIKAYAWNANGIPGDDSTRNQRTSPRAPANIQVFFDSGALKASVSWTPTEGAFNYTVVASSDSSQRSCSTTLSSCSISSLQCGTEYLISVSANNDAGSSKSCSAPTLKTVACAPGRVMIQEEPPGHLSVAWSNVELGDYYVAFVKSDDGLEVHCNTSLTQCNFLSECGFTYFISVFAYNKAGQSPLGDVFNYTTAPCCPNDISPVLVSSDRVEIAWSPVRGAELYETKAIAGYSIVECNDTAPACTLSALDCDTKYNVTVYSFSEVRGSNLSCSSHFITTAPCSPEIKNISKDAFSMINVHWRSTNEGATYTVTAQGKKGLFQCSSTGETCRMGGLPCGSMFSVTAVAETQAGKSLPSYSVPLETVPCCPAGLTAAQVTQSIINVSWTAGAVAQTYAAVLESYIGQSKCHTHQNHCLLGCITCGINYTVALKAISSTGLTADCAYQSYSSSVCCPLGVKLYRLGPNGIRIYWRASRGAANYSTDLYGSKGIFTCAPHAGLSFCDITNIPCGDVYTVMVSPVAETGLKLTFCPKKIYSVTCSGSTLGMVIYRGKRNDTASPR.

The signal sequence occupies residues 1–25 (MAGRPEKCFSLIRFTLLCLKMVISS). Fibronectin type-III domains are found at residues 28–115 (APEI…TVLA), 116–203 (APVL…SPRA), 204–288 (PANI…TVAC), 289–373 (APGR…TAPC), 374–459 (CPND…TAPC), 460–544 (SPEI…TVPC), 545–633 (CPAG…CPLG), and 631–715 (PLGV…YSVT). N-linked (GlcNAc...) asparagine glycosylation occurs at asparagine 230. Residue asparagine 433 is glycosylated (N-linked (GlcNAc...) asparagine).

The protein resides in the secreted. This chain is Fibronectin type III domain-containing protein 7 (Fndc7), found in Mus musculus (Mouse).